The sequence spans 252 residues: Gamma carbonic anhydrase-like 1, mitochondrial (252 aa).

A mitochondrion-targeting transit peptide spans 1 to 29; it reads MATSIARLSRRGVTSNLIRRCFAAEAALA. Substrate-binding positions include 99-101 and 114-115; these read RGD and QE. His120 serves as a coordination point for Zn(2+). The substrate site is built by Arg148, Gln160, and Tyr227.

It belongs to the gamma-class carbonic anhydrase family. In terms of assembly, component of the mitochondrial oxidoreductase respiratory chain complex I; element of the extra matrix-exposed domain, which is attached to the membrane arm of this complex. Interacts with GAMMACA2.

Its subcellular location is the mitochondrion membrane. Its function is as follows. Involved in complex I assembly in mitochondria and respiration. The polypeptide is Gamma carbonic anhydrase-like 1, mitochondrial (GAMMACAL1) (Arabidopsis thaliana (Mouse-ear cress)).